We begin with the raw amino-acid sequence, 145 residues long: Putative pre-16S rRNA nuclease (145 aa).

It belongs to the YqgF nuclease family.

Its subcellular location is the cytoplasm. In terms of biological role, could be a nuclease involved in processing of the 5'-end of pre-16S rRNA. In Prochlorococcus marinus (strain MIT 9211), this protein is Putative pre-16S rRNA nuclease.